A 522-amino-acid chain; its full sequence is 2-isopropylmalate synthase (522 aa).

The region spanning 5 to 267 is the Pyruvate carboxyltransferase domain; sequence VIIFDTTLRD…ETGINAKEIH (263 aa). Mn(2+) is bound by residues aspartate 14, histidine 202, histidine 204, and asparagine 238. The interval 392 to 522 is regulatory domain; the sequence is QLRQLVVQSD…MHKNRELGGV (131 aa).

Belongs to the alpha-IPM synthase/homocitrate synthase family. LeuA type 1 subfamily. Homodimer. The cofactor is Mn(2+).

It is found in the cytoplasm. It carries out the reaction 3-methyl-2-oxobutanoate + acetyl-CoA + H2O = (2S)-2-isopropylmalate + CoA + H(+). The protein operates within amino-acid biosynthesis; L-leucine biosynthesis; L-leucine from 3-methyl-2-oxobutanoate: step 1/4. Catalyzes the condensation of the acetyl group of acetyl-CoA with 3-methyl-2-oxobutanoate (2-ketoisovalerate) to form 3-carboxy-3-hydroxy-4-methylpentanoate (2-isopropylmalate). In Shewanella oneidensis (strain ATCC 700550 / JCM 31522 / CIP 106686 / LMG 19005 / NCIMB 14063 / MR-1), this protein is 2-isopropylmalate synthase.